A 618-amino-acid polypeptide reads, in one-letter code: Phosphoenolpyruvate carboxykinase [GTP] (618 aa).

Substrate-binding positions include Arg-83 and 217–219; that span reads YGG. Mn(2+)-binding residues include Lys-226 and His-245. Ser-267 contacts substrate. Residue 268–273 participates in GTP binding; the sequence is MCGKTS. Residue Cys-269 is part of the active site. Asp-286 is a Mn(2+) binding site. Position 381 to 383 (381 to 383) interacts with substrate; that stretch reads NAR. Residues Arg-383 and Arg-415 each contribute to the GTP site.

The protein belongs to the phosphoenolpyruvate carboxykinase [GTP] family. The cofactor is Mn(2+).

The protein localises to the cytoplasm. The catalysed reaction is oxaloacetate + GTP = phosphoenolpyruvate + GDP + CO2. It participates in carbohydrate biosynthesis; gluconeogenesis. Functionally, catalyzes the conversion of oxaloacetate (OAA) to phosphoenolpyruvate (PEP), the rate-limiting step in the metabolic pathway that produces glucose from lactate and other precursors derived from the citric acid cycle. The polypeptide is Phosphoenolpyruvate carboxykinase [GTP] (Pyrococcus abyssi (strain GE5 / Orsay)).